Here is a 240-residue protein sequence, read N- to C-terminus: Uridylate kinase (240 aa).

Residue 13–16 participates in ATP binding; sequence KFSG. Gly-55 serves as a coordination point for UMP. Gly-56 and Arg-60 together coordinate ATP. UMP contacts are provided by residues Asp-76 and 137 to 144; that span reads TGNPFFTT. Positions 164, 170, and 173 each coordinate ATP.

Belongs to the UMP kinase family. As to quaternary structure, homohexamer.

It localises to the cytoplasm. It carries out the reaction UMP + ATP = UDP + ADP. The protein operates within pyrimidine metabolism; CTP biosynthesis via de novo pathway; UDP from UMP (UMPK route): step 1/1. Inhibited by UTP. Its function is as follows. Catalyzes the reversible phosphorylation of UMP to UDP. This Helicobacter acinonychis (strain Sheeba) protein is Uridylate kinase.